The following is a 206-amino-acid chain: Heterochromatin protein 1 (206 aa).

2 disordered regions span residues 1–24 and 47–145; these read MGKK…EEEY and GYPE…GFDR. Phosphoserine is present on residues Ser11 and Ser15. The region spanning 24–82 is the Chromo 1 domain; sequence YAVEKIIDRRVRKGKVEYYLKWKGYPETENTWEPENNLDCQDLIQQYEASRKDEEKSAA. A compositionally biased stretch (low complexity) spans 50-60; that stretch reads ETENTWEPENN. Residues 72 to 98 are compositionally biased toward basic and acidic residues; it reads ASRKDEEKSAASKKDRPSSSAKAKETQ. Residues 95–206 are binds to Su(var)39; the sequence is KETQGRASSS…RLSWYSDNED (112 aa). Ser102, Ser103, and Ser113 each carry phosphoserine. Thr127, Thr128, and Thr134 each carry phosphothreonine. In terms of domain architecture, Chromo 2 spans 147-205; the sequence is LEAEKILGASDNNGRLTFLIQFKGVDQAEMVPSSVANEKIPRMVIHFYEERLSWYSDNE.

In terms of assembly, homodimer. Probably associates with Su(var)3-9. Interacts with Mcm10. Interacts (via chromoshadow domain) with piwi (via N-terminal region). Interacts with Rrp6. Associates with and may be part of the HipHop-HOAP telomere capping complex but is not required for its stability or telomere localization. Interacts (via the chromo domain 2 (chromoshadow domain) and the hinge region between chromo domains 1 and 2) with cav/HOAP (via C-terminus); the interaction is direct. Each molecule of cav/HOAP interacts with 2 molecules of Su(var)205/HP1. Interacts with HipHop (via N-terminus). Interacts with moi/modigliani; the interaction is direct. Interacts (via chromo domain 1) with His3/histone 3 (via N-terminal tail methylated at 'Lys-10'); the interaction is direct. As to expression, salivary gland (at protein level).

The protein resides in the nucleus. Its subcellular location is the nucleoplasm. It is found in the chromosome. The protein localises to the telomere. Its function is as follows. Structural component of heterochromatin, involved in gene repression and the modification of position-effect-variegation. Recognizes and binds histone H3 tails methylated at 'Lys-9', leading to epigenetic repression. Stabilizes chromatin-associated RNAs probably by binding to them and thereby preventing their degradation. Associates with, and may be a part of, the HipHop-HOAP complex that recruits the MTV complex to form the terminin telomere-capping complex, which binds to chromosome ends in a sequence-independent manner and prevents telomere fusion. Telomere capping is independent of the origin recognition complex (ORC). This chain is Heterochromatin protein 1, found in Drosophila melanogaster (Fruit fly).